The chain runs to 127 residues: Small ribosomal subunit protein bS6 (127 aa).

A compositionally biased stretch (basic and acidic residues) spans 106-117; that stretch reads ERKAQSEKKEAE. The disordered stretch occupies residues 106–127; that stretch reads ERKAQSEKKEAEVSEGEGGTEA. Residues 118 to 127 show a composition bias toward acidic residues; the sequence is VSEGEGGTEA.

The protein belongs to the bacterial ribosomal protein bS6 family.

Binds together with bS18 to 16S ribosomal RNA. The protein is Small ribosomal subunit protein bS6 of Thermotoga neapolitana (strain ATCC 49049 / DSM 4359 / NBRC 107923 / NS-E).